The chain runs to 114 residues: MGCRLLCCAVLCLLGAVPIDTEVTQTPKHLVMGMTNKKSLKCEQHMGHRAMYWYKQKAKKPPELMFVYSYEKLSINESVPSRFSPECPNSSLLNLHLHALQPEDSALYLCASSQ.

The first 21 residues, 1–21 (MGCRLLCCAVLCLLGAVPIDT), serve as a signal peptide directing secretion. Positions 22 to 114 (EVTQTPKHLV…SALYLCASSQ (93 aa)) constitute an Ig-like domain. Cysteines 42 and 110 form a disulfide. Residues Asn-76 and Asn-89 are each glycosylated (N-linked (GlcNAc...) asparagine).

Alpha-beta TR is a heterodimer composed of an alpha and beta chain; disulfide-linked. The alpha-beta TR is associated with the transmembrane signaling CD3 coreceptor proteins to form the TR-CD3 (TcR or TCR). The assembly of alpha-beta TR heterodimers with CD3 occurs in the endoplasmic reticulum where a single alpha-beta TR heterodimer associates with one CD3D-CD3E heterodimer, one CD3G-CD3E heterodimer and one CD247 homodimer forming a stable octameric structure. CD3D-CD3E and CD3G-CD3E heterodimers preferentially associate with TR alpha and TR beta chains, respectively. The association of the CD247 homodimer is the last step of TcR assembly in the endoplasmic reticulum and is required for transport to the cell surface.

The protein localises to the cell membrane. V region of the variable domain of T cell receptor (TR) beta chain that participates in the antigen recognition. Alpha-beta T cell receptors are antigen specific receptors which are essential to the immune response and are present on the cell surface of T lymphocytes. Recognize peptide-major histocompatibility (MH) (pMH) complexes that are displayed by antigen presenting cells (APC), a prerequisite for efficient T cell adaptive immunity against pathogens. Binding of alpha-beta TR to pMH complex initiates TR-CD3 clustering on the cell surface and intracellular activation of LCK that phosphorylates the ITAM motifs of CD3G, CD3D, CD3E and CD247 enabling the recruitment of ZAP70. In turn ZAP70 phosphorylates LAT, which recruits numerous signaling molecules to form the LAT signalosome. The LAT signalosome propagates signal branching to three major signaling pathways, the calcium, the mitogen-activated protein kinase (MAPK) kinase and the nuclear factor NF-kappa-B (NF-kB) pathways, leading to the mobilization of transcription factors that are critical for gene expression and essential for T cell growth and differentiation. The T cell repertoire is generated in the thymus, by V-(D)-J rearrangement. This repertoire is then shaped by intrathymic selection events to generate a peripheral T cell pool of self-MH restricted, non-autoaggressive T cells. Post-thymic interaction of alpha-beta TR with the pMH complexes shapes TR structural and functional avidity. The chain is T cell receptor beta variable 4-1 from Homo sapiens (Human).